We begin with the raw amino-acid sequence, 161 residues long: Crossover junction endodeoxyribonuclease RuvC (161 aa).

Catalysis depends on residues aspartate 9, glutamate 72, and aspartate 144. Residues aspartate 9, glutamate 72, and aspartate 144 each contribute to the Mg(2+) site.

Belongs to the RuvC family. Homodimer which binds Holliday junction (HJ) DNA. The HJ becomes 2-fold symmetrical on binding to RuvC with unstacked arms; it has a different conformation from HJ DNA in complex with RuvA. In the full resolvosome a probable DNA-RuvA(4)-RuvB(12)-RuvC(2) complex forms which resolves the HJ. Mg(2+) serves as cofactor.

The protein localises to the cytoplasm. It catalyses the reaction Endonucleolytic cleavage at a junction such as a reciprocal single-stranded crossover between two homologous DNA duplexes (Holliday junction).. The RuvA-RuvB-RuvC complex processes Holliday junction (HJ) DNA during genetic recombination and DNA repair. Endonuclease that resolves HJ intermediates. Cleaves cruciform DNA by making single-stranded nicks across the HJ at symmetrical positions within the homologous arms, yielding a 5'-phosphate and a 3'-hydroxyl group; requires a central core of homology in the junction. The consensus cleavage sequence is 5'-(A/T)TT(C/G)-3'. Cleavage occurs on the 3'-side of the TT dinucleotide at the point of strand exchange. HJ branch migration catalyzed by RuvA-RuvB allows RuvC to scan DNA until it finds its consensus sequence, where it cleaves and resolves the cruciform DNA. This is Crossover junction endodeoxyribonuclease RuvC from Synechococcus sp. (strain ATCC 27144 / PCC 6301 / SAUG 1402/1) (Anacystis nidulans).